Here is a 3133-residue protein sequence, read N- to C-terminus: Probable polyketide synthase 38 (3133 aa).

Residues 9–440 (DDDVAVIGIG…GSNVCLILSE (432 aa)) form the Ketosynthase family 3 (KS3) domain. Active-site for beta-ketoacyl synthase activity residues include Cys-181, His-320, and His-363. Residues 647–680 (GVSADIIIGHSLGEISSAYCSGMIDFQTLCYLTY) form an acyl/malonyl transferase region. Ser-657 functions as the For acyl/malonyl transferase activity in the catalytic mechanism. An N-terminal hotdog fold region spans residues 945 to 1067 (GPSIHSLGNN…GNFSLSKHNI (123 aa)). A PKS/mFAS DH domain is found at 945–1248 (GPSIHSLGNN…CTIVASNPDS (304 aa)). The Proton acceptor; for dehydratase activity role is filled by His-979. The segment at 1083 to 1248 (NFTCISKQDL…CTIVASNPDS (166 aa)) is C-terminal hotdog fold. The active-site Proton donor; for dehydratase activity is the Asp-1155. The tract at residues 1370-1408 (NNNNNNNNNNNNNNNNNNNNNNNNNNNNNNNNNDNDNDN) is disordered. Residues 2562–2639 (NNNEIIRSTI…QSIEIIKSAH (78 aa)) enclose the Carrier domain. Ser-2599 carries the post-translational modification O-(pantetheine 4'-phosphoryl)serine. Residues 2649–2711 (NNNNSNHHDN…NNNNNNNNNN (63 aa)) are a coiled coil. Disordered stretches follow at residues 2691-2715 (LNNN…NNNN) and 2794-2817 (GNIS…NNNQ). 2 stretches are compositionally biased toward low complexity: residues 2692–2715 (NNNN…NNNN) and 2795–2817 (NISN…NNNQ).

Pantetheine 4'-phosphate is required as a cofactor.

Functionally, probable polyketide synthase. This is Probable polyketide synthase 38 (pks38) from Dictyostelium discoideum (Social amoeba).